Reading from the N-terminus, the 159-residue chain is Phosphopantetheine adenylyltransferase (159 aa).

H16 serves as a coordination point for ATP. K40, M72, and R86 together coordinate substrate. ATP-binding positions include 87–89 (GLR), E97, and 122–128 (YQYLSAS).

The protein belongs to the bacterial CoaD family. Homohexamer. Mg(2+) is required as a cofactor.

It localises to the cytoplasm. The enzyme catalyses (R)-4'-phosphopantetheine + ATP + H(+) = 3'-dephospho-CoA + diphosphate. It functions in the pathway cofactor biosynthesis; coenzyme A biosynthesis; CoA from (R)-pantothenate: step 4/5. Functionally, reversibly transfers an adenylyl group from ATP to 4'-phosphopantetheine, yielding dephospho-CoA (dPCoA) and pyrophosphate. This is Phosphopantetheine adenylyltransferase from Dehalococcoides mccartyi (strain ATCC BAA-2100 / JCM 16839 / KCTC 5957 / BAV1).